The sequence spans 236 residues: Apoptosis regulator Bcl-2 (236 aa).

The BH4 signature appears at 10–30; it reads DNREIVMKYIHYKLSQRGYEW. Position 69 is a phosphothreonine; by MAPK8 (Thr69). Residue Ser70 is modified to Phosphoserine; by MAPK8 and PKC. At Ser84 the chain carries Phosphoserine; by MAPK8. The BH3 motif lies at 90 to 104; it reads VHLTLRRAGDDFSRR. Positions 133-152 match the BH1 motif; sequence ELFRDGVNWGRIVAFFEFGG. The short motif at 184–199 is the BH2 element; sequence TWIQDNGGWDAFVELY. A helical transmembrane segment spans residues 209–230; the sequence is FSWLSLKALLSLALVGACITLG.

It belongs to the Bcl-2 family. As to quaternary structure, forms homodimers, and heterodimers with BAX, BAD, BAK and Bcl-X(L). Heterodimerization with BAX requires intact BH1 and BH2 motifs, and is necessary for anti-apoptotic activity. Component of the complex, at least composed of LRPPRC, BECN1 and BCL2; the interactions prevent BECN1 from forming an autophagy-inducing complex with PIK3C3. Interacts with EI24. Also interacts with APAF1, BBC3, BCL2L1, BNIPL, MRPL41 and TP53BP2. Binding to FKBP8 seems to target BCL2 to the mitochondria and probably interferes with the binding of BCL2 to its targets. Interacts with BAG1 in an ATP-dependent manner. Interacts with RAF1 (the 'Ser-338' and 'Ser-339' phosphorylated form). Interacts (via the BH4 domain) with EGLN3; the interaction prevents the formation of the BAX-BCL2 complex and inhibits the anti-apoptotic activity of BCL2. Interacts with G0S2; this interaction also prevents the formation of the anti-apoptotic BAX-BCL2 complex. Interacts with RTL10/BOP. Interacts with the SCF(FBXO10) complex. Interacts (via the loop between motifs BH4 and BH3) with NLRP1 (via LRR repeats), but not with NLRP2, NLRP3, NLRP4, PYCARD, nor MEFV. Interacts with GIMAP3/IAN4, GIMAP4/IAN1 and GIMAP5/IAN5. Interacts with BCAP31. Interacts with IRF3; the interaction is inhibited by Sendai virus infection. Interacts with BECN1; thereby inhibiting autophagy in non-starvation conditions. Interacts with AMBRA1; thereby inhibiting autophagy. In terms of processing, phosphorylation/dephosphorylation on Ser-70 regulates anti-apoptotic activity. Growth factor-stimulated phosphorylation on Ser-70 by PKC is required for the anti-apoptosis activity and occurs during the G2/M phase of the cell cycle. In the absence of growth factors, BCL2 appears to be phosphorylated by other protein kinases such as ERKs and stress-activated kinases. Phosphorylated by MAPK8/JNK1 at Thr-69, Ser-70 and Ser-84, which stimulates starvation-induced autophagy. Dephosphorylated by protein phosphatase 2A (PP2A). Post-translationally, proteolytically cleaved by caspases during apoptosis. The cleaved protein, lacking the BH4 motif, has pro-apoptotic activity, causes the release of cytochrome c into the cytosol promoting further caspase activity. Monoubiquitinated by PRKN, leading to an increase in its stability. Ubiquitinated by SCF(FBXO10), leading to its degradation by the proteasome.

It localises to the mitochondrion outer membrane. The protein resides in the nucleus membrane. The protein localises to the endoplasmic reticulum membrane. Its subcellular location is the cytoplasm. Its function is as follows. Suppresses apoptosis in a variety of cell systems including factor-dependent lymphohematopoietic and neural cells. Regulates cell death by controlling the mitochondrial membrane permeability. Appears to function in a feedback loop system with caspases. Inhibits caspase activity either by preventing the release of cytochrome c from the mitochondria and/or by binding to the apoptosis-activating factor (APAF-1). Also acts as an inhibitor of autophagy: interacts with BECN1 and AMBRA1 during non-starvation conditions and inhibits their autophagy function. May attenuate inflammation by impairing NLRP1-inflammasome activation, hence CASP1 activation and IL1B release. The chain is Apoptosis regulator Bcl-2 (BCL2) from Canis lupus familiaris (Dog).